Here is an 89-residue protein sequence, read N- to C-terminus: Small ribosomal subunit protein uS15c (89 aa).

This sequence belongs to the universal ribosomal protein uS15 family. As to quaternary structure, part of the 30S ribosomal subunit.

It localises to the plastid. It is found in the chloroplast. The chain is Small ribosomal subunit protein uS15c (rps15) from Chloranthus spicatus (Chulantree).